Reading from the N-terminus, the 305-residue chain is Protoheme IX farnesyltransferase (305 aa).

9 helical membrane passes run 38-58 (FITT…SFLG), 60-80 (LDIV…SCAI), 110-130 (AYAF…MTTV), 131-151 (TSAV…TMWS), 161-181 (IGSV…TGTI), 185-205 (AWVL…SLAI), 227-247 (VTKR…FFLG), 249-269 (LGWP…VIGL), and 285-305 (FVYS…ITLF).

Belongs to the UbiA prenyltransferase family. Protoheme IX farnesyltransferase subfamily. As to quaternary structure, interacts with CtaA.

It is found in the cell membrane. The catalysed reaction is heme b + (2E,6E)-farnesyl diphosphate + H2O = Fe(II)-heme o + diphosphate. It participates in porphyrin-containing compound metabolism; heme O biosynthesis; heme O from protoheme: step 1/1. Converts heme B (protoheme IX) to heme O by substitution of the vinyl group on carbon 2 of heme B porphyrin ring with a hydroxyethyl farnesyl side group. The protein is Protoheme IX farnesyltransferase of Bacillus pumilus (strain SAFR-032).